A 341-amino-acid chain; its full sequence is MAARELILAFESSCDETSVAVVENGDTILSNIIATQIKSHQRFGGVVPEVASRHHVEQITLVTDAALKEAGVTYDDLTAVAVTYGPGLVGALLIGVTAAKTIAYAHHLPLIPVNHMAGHIYAARFVKPLAYPLLALAVSGGHTELVYMRSAGEFEIIGDTRDDAAGEAYDKVGRILGIPYPAGKEVDRLAHLGQDTFHFPRAMDKEDNLDFSFSGLKSAVINTVHHAHQLGQELSREDLAASFQAAVVDVLVHKTQKALHQYPVKQLIVAGGVAANQGLKEAMNETLAVNFPDVDVIVPPLRLTGDNGAMIGAAAHIEWAKQHLASESLNADPGLSFTHAS.

Fe cation-binding residues include histidine 115 and histidine 119. Residues 137 to 141, aspartate 170, glycine 183, aspartate 187, and asparagine 276 each bind substrate; that span reads AVSGG. Residue aspartate 306 participates in Fe cation binding.

It belongs to the KAE1 / TsaD family. Requires Fe(2+) as cofactor.

It is found in the cytoplasm. The enzyme catalyses L-threonylcarbamoyladenylate + adenosine(37) in tRNA = N(6)-L-threonylcarbamoyladenosine(37) in tRNA + AMP + H(+). Functionally, required for the formation of a threonylcarbamoyl group on adenosine at position 37 (t(6)A37) in tRNAs that read codons beginning with adenine. Is involved in the transfer of the threonylcarbamoyl moiety of threonylcarbamoyl-AMP (TC-AMP) to the N6 group of A37, together with TsaE and TsaB. TsaD likely plays a direct catalytic role in this reaction. This Lacticaseibacillus casei (strain BL23) (Lactobacillus casei) protein is tRNA N6-adenosine threonylcarbamoyltransferase.